We begin with the raw amino-acid sequence, 325 residues long: Small ribosomal subunit protein uS2 (325 aa).

Residues 212–226 (KEEQAKAEAERERLA) show a composition bias toward basic and acidic residues. The tract at residues 212 to 325 (KEEQAKAEAE…TEPKASTGNW (114 aa)) is disordered. Low complexity-rich tracts occupy residues 234 to 247 (QPAA…QWAD) and 261 to 289 (PVTT…TGSG). A compositionally biased stretch (polar residues) spans 290–300 (FNQDDWSVPTT).

This sequence belongs to the universal ribosomal protein uS2 family. As to quaternary structure, component of the small ribosomal subunit. Mature ribosomes consist of a small (40S) and a large (60S) subunit. The 40S subunit contains about 33 different proteins and 1 molecule of RNA (18S). The 60S subunit contains about 49 different proteins and 3 molecules of RNA (28S, 5.8S and 5S). Interacts with ribosomal protein S21.

Its subcellular location is the cytoplasm. Its function is as follows. Required for the assembly and/or stability of the 40S ribosomal subunit. Required for the processing of the 20S rRNA-precursor to mature 18S rRNA in a late step of the maturation of 40S ribosomal subunits. The protein is Small ribosomal subunit protein uS2 of Suberites domuncula (Sponge).